We begin with the raw amino-acid sequence, 404 residues long: L-cysteine:1D-myo-inositol 2-amino-2-deoxy-alpha-D-glucopyranoside ligase 1 (404 aa).

Cys-47 lines the Zn(2+) pocket. L-cysteinyl-5'-AMP is bound by residues 47-50 (CGIT), Thr-62, and 85-87 (NIT). A 'HIGH' region motif is present at residues 49–59 (ITPYDSTHLGH). Positions 188 to 193 (ERGGDP) match the 'ERGGDP' region motif. L-cysteinyl-5'-AMP is bound at residue Trp-228. Cys-232 is a Zn(2+) binding site. Residue 250–252 (GSD) coordinates L-cysteinyl-5'-AMP. Residue His-257 coordinates Zn(2+). Ile-284 contributes to the L-cysteinyl-5'-AMP binding site. The 'KMSKS' region signature appears at 290–294 (KMSKS).

This sequence belongs to the class-I aminoacyl-tRNA synthetase family. MshC subfamily. Monomer. Zn(2+) serves as cofactor.

It carries out the reaction 1D-myo-inositol 2-amino-2-deoxy-alpha-D-glucopyranoside + L-cysteine + ATP = 1D-myo-inositol 2-(L-cysteinylamino)-2-deoxy-alpha-D-glucopyranoside + AMP + diphosphate + H(+). Its function is as follows. Catalyzes the ATP-dependent condensation of GlcN-Ins and L-cysteine to form L-Cys-GlcN-Ins. In Corynebacterium jeikeium (strain K411), this protein is L-cysteine:1D-myo-inositol 2-amino-2-deoxy-alpha-D-glucopyranoside ligase 1.